A 316-amino-acid chain; its full sequence is B3 domain-containing protein Os04g0581400 (316 aa).

Positions 1–100 (MEFATTSSRF…GSGGGGGGED (100 aa)) are disordered. A compositionally biased stretch (acidic residues) spans 13–36 (EEEEEEEGEQEMEQEQDEEEEEAE). Positions 46–77 (TSAAAAATASSSSPTSVSPSATASAAASTSAS) are enriched in low complexity. The span at 88–98 (GASGSGGGGGG) shows a compositional bias: gly residues. A DNA-binding region (TF-B3) is located at residues 110–215 (FDKVVTPSDV…RLFIDWKRRA (106 aa)). Residues 239–290 (GGAGASSCRPRRPPRSTSITAFARASTSATSTPLCRRGSSSSSAPQGRGFIS) are disordered. Residues 253-270 (RSTSITAFARASTSATST) show a composition bias toward low complexity.

The protein resides in the nucleus. The polypeptide is B3 domain-containing protein Os04g0581400 (Oryza sativa subsp. japonica (Rice)).